Here is a 464-residue protein sequence, read N- to C-terminus: UDP-N-acetylmuramoylalanine--D-glutamate ligase (464 aa).

112 to 118 (GTDGKTT) contributes to the ATP binding site.

The protein belongs to the MurCDEF family.

It localises to the cytoplasm. The catalysed reaction is UDP-N-acetyl-alpha-D-muramoyl-L-alanine + D-glutamate + ATP = UDP-N-acetyl-alpha-D-muramoyl-L-alanyl-D-glutamate + ADP + phosphate + H(+). It participates in cell wall biogenesis; peptidoglycan biosynthesis. In terms of biological role, cell wall formation. Catalyzes the addition of glutamate to the nucleotide precursor UDP-N-acetylmuramoyl-L-alanine (UMA). In Pelodictyon phaeoclathratiforme (strain DSM 5477 / BU-1), this protein is UDP-N-acetylmuramoylalanine--D-glutamate ligase.